The following is a 317-amino-acid chain: Ribosomal RNA large subunit methyltransferase F (317 aa).

The protein belongs to the methyltransferase superfamily. METTL16/RlmF family.

It localises to the cytoplasm. The enzyme catalyses adenosine(1618) in 23S rRNA + S-adenosyl-L-methionine = N(6)-methyladenosine(1618) in 23S rRNA + S-adenosyl-L-homocysteine + H(+). Specifically methylates the adenine in position 1618 of 23S rRNA. This is Ribosomal RNA large subunit methyltransferase F from Pseudomonas putida (strain ATCC 47054 / DSM 6125 / CFBP 8728 / NCIMB 11950 / KT2440).